Reading from the N-terminus, the 159-residue chain is Transcriptional repressor NrdR (159 aa).

A zinc finger spans residues 3 to 34 (CPTCQNTDSRVLESRSADTGKSVRRRRECLNC). An ATP-cone domain is found at 49–139 (ISVLKKDGSR…VYRKFNGVKD (91 aa)).

The protein belongs to the NrdR family. It depends on Zn(2+) as a cofactor.

Functionally, negatively regulates transcription of bacterial ribonucleotide reductase nrd genes and operons by binding to NrdR-boxes. This is Transcriptional repressor NrdR from Prochlorococcus marinus (strain MIT 9515).